Here is a 170-residue protein sequence, read N- to C-terminus: Acireductone dioxygenase (170 aa).

Fe(2+) is bound by residues His-99, His-101, Glu-105, and His-144. His-99, His-101, Glu-105, and His-144 together coordinate Ni(2+).

This sequence belongs to the acireductone dioxygenase (ARD) family. In terms of assembly, monomer. The cofactor is Fe(2+). It depends on Ni(2+) as a cofactor.

The catalysed reaction is 1,2-dihydroxy-5-(methylsulfanyl)pent-1-en-3-one + O2 = 3-(methylsulfanyl)propanoate + CO + formate + 2 H(+). It catalyses the reaction 1,2-dihydroxy-5-(methylsulfanyl)pent-1-en-3-one + O2 = 4-methylsulfanyl-2-oxobutanoate + formate + 2 H(+). Its pathway is amino-acid biosynthesis; L-methionine biosynthesis via salvage pathway; L-methionine from S-methyl-5-thio-alpha-D-ribose 1-phosphate: step 5/6. Functionally, catalyzes 2 different reactions between oxygen and the acireductone 1,2-dihydroxy-3-keto-5-methylthiopentene (DHK-MTPene) depending upon the metal bound in the active site. Fe-containing acireductone dioxygenase (Fe-ARD) produces formate and 2-keto-4-methylthiobutyrate (KMTB), the alpha-ketoacid precursor of methionine in the methionine recycle pathway. Ni-containing acireductone dioxygenase (Ni-ARD) produces methylthiopropionate, carbon monoxide and formate, and does not lie on the methionine recycle pathway. The chain is Acireductone dioxygenase from Bacillus cereus (strain ZK / E33L).